The following is a 170-amino-acid chain: VIP peptides (170 aa).

The signal sequence occupies residues 1-20 (MDTRNKAQLLVLLTLLSVLF). A propeptide spanning residues 21 to 79 (SQTSAWPLYRAPSALRLGDRIPFEGANEPDQVSLKEDIDMLQNALAENDTPYYDVSRNA) is cleaved from the precursor. Phosphoserine is present on Ser76. The residue at position 107 (Met107) is a Methionine amide. At Asn152 the chain carries Asparagine amide. The propeptide occupies 156–170 (SSEGESPDFPEELEK).

It belongs to the glucagon family.

It is found in the secreted. Functionally, VIP is a neuropeptide involved in a diverse array of physiological processes through activating the PACAP subfamily of class B1 G protein-coupled receptors: VIP receptor 1 (VPR1) and VIP receptor 2 (VPR2). Abundantly expressed throughout the CNS and peripheral nervous systems where they primarily exert neuroprotective and immune modulatory roles. Also causes vasodilation, lowers arterial blood pressure, stimulates myocardial contractility, increases glycogenolysis and relaxes the smooth muscle of trachea, stomach and gall bladder. Its function is as follows. PHM-27 and PHV-42 are two bioactive forms from proteolysis of the same precursor protein, that cause vasodilation. PHM-27 is a potent agonist of the calcitonin receptor CALCR, with similar efficacy as calcitonin. In Homo sapiens (Human), this protein is VIP peptides.